The sequence spans 509 residues: Maturase K (509 aa).

This sequence belongs to the intron maturase 2 family. MatK subfamily.

Its subcellular location is the plastid. The protein resides in the chloroplast. Its function is as follows. Usually encoded in the trnK tRNA gene intron. Probably assists in splicing its own and other chloroplast group II introns. In Nicotiana rustica (Aztec tobacco), this protein is Maturase K.